We begin with the raw amino-acid sequence, 325 residues long: 5-dehydro-2-deoxygluconokinase (325 aa).

This sequence belongs to the carbohydrate kinase PfkB family.

It catalyses the reaction 5-dehydro-2-deoxy-D-gluconate + ATP = 6-phospho-5-dehydro-2-deoxy-D-gluconate + ADP + H(+). It participates in polyol metabolism; myo-inositol degradation into acetyl-CoA; acetyl-CoA from myo-inositol: step 5/7. Functionally, catalyzes the phosphorylation of 5-dehydro-2-deoxy-D-gluconate (2-deoxy-5-keto-D-gluconate or DKG) to 6-phospho-5-dehydro-2-deoxy-D-gluconate (DKGP). The chain is 5-dehydro-2-deoxygluconokinase from Listeria monocytogenes serovar 1/2a (strain ATCC BAA-679 / EGD-e).